A 428-amino-acid polypeptide reads, in one-letter code: Adenylosuccinate synthetase (428 aa).

GTP contacts are provided by residues 12-18 (GDEGKGK) and 40-42 (GHT). Catalysis depends on Asp13, which acts as the Proton acceptor. The Mg(2+) site is built by Asp13 and Gly40. Residues 13-16 (DEGK), 38-41 (NAGH), Thr127, Arg141, Gln222, Thr237, and Arg301 each bind IMP. Residue His41 is the Proton donor of the active site. Substrate is bound at residue 297–303 (TVTKRPR). GTP is bound by residues Arg303, 329-331 (CLD), and 411-413 (SVG).

Belongs to the adenylosuccinate synthetase family. As to quaternary structure, homodimer. It depends on Mg(2+) as a cofactor.

Its subcellular location is the cytoplasm. It catalyses the reaction IMP + L-aspartate + GTP = N(6)-(1,2-dicarboxyethyl)-AMP + GDP + phosphate + 2 H(+). The protein operates within purine metabolism; AMP biosynthesis via de novo pathway; AMP from IMP: step 1/2. Plays an important role in the de novo pathway of purine nucleotide biosynthesis. Catalyzes the first committed step in the biosynthesis of AMP from IMP. This Levilactobacillus brevis (strain ATCC 367 / BCRC 12310 / CIP 105137 / JCM 1170 / LMG 11437 / NCIMB 947 / NCTC 947) (Lactobacillus brevis) protein is Adenylosuccinate synthetase.